We begin with the raw amino-acid sequence, 112 residues long: Nucleoid-associated protein CA_C0126 (112 aa).

The segment covering 93-102 has biased composition (basic and acidic residues); sequence EEETSGEMKK. Residues 93–112 are disordered; that stretch reads EEETSGEMKKLTGGLNIPGL.

It belongs to the YbaB/EbfC family. As to quaternary structure, homodimer.

Its subcellular location is the cytoplasm. It is found in the nucleoid. Binds to DNA and alters its conformation. May be involved in regulation of gene expression, nucleoid organization and DNA protection. The protein is Nucleoid-associated protein CA_C0126 of Clostridium acetobutylicum (strain ATCC 824 / DSM 792 / JCM 1419 / IAM 19013 / LMG 5710 / NBRC 13948 / NRRL B-527 / VKM B-1787 / 2291 / W).